Consider the following 169-residue polypeptide: Crossover junction endodeoxyribonuclease RuvC (169 aa).

Residues D11, E71, and D143 contribute to the active site. Mg(2+) is bound by residues D11, E71, and D143.

It belongs to the RuvC family. As to quaternary structure, homodimer which binds Holliday junction (HJ) DNA. The HJ becomes 2-fold symmetrical on binding to RuvC with unstacked arms; it has a different conformation from HJ DNA in complex with RuvA. In the full resolvosome a probable DNA-RuvA(4)-RuvB(12)-RuvC(2) complex forms which resolves the HJ. The cofactor is Mg(2+).

It is found in the cytoplasm. The enzyme catalyses Endonucleolytic cleavage at a junction such as a reciprocal single-stranded crossover between two homologous DNA duplexes (Holliday junction).. In terms of biological role, the RuvA-RuvB-RuvC complex processes Holliday junction (HJ) DNA during genetic recombination and DNA repair. Endonuclease that resolves HJ intermediates. Cleaves cruciform DNA by making single-stranded nicks across the HJ at symmetrical positions within the homologous arms, yielding a 5'-phosphate and a 3'-hydroxyl group; requires a central core of homology in the junction. The consensus cleavage sequence is 5'-(A/T)TT(C/G)-3'. Cleavage occurs on the 3'-side of the TT dinucleotide at the point of strand exchange. HJ branch migration catalyzed by RuvA-RuvB allows RuvC to scan DNA until it finds its consensus sequence, where it cleaves and resolves the cruciform DNA. This is Crossover junction endodeoxyribonuclease RuvC from Rhizobium johnstonii (strain DSM 114642 / LMG 32736 / 3841) (Rhizobium leguminosarum bv. viciae).